We begin with the raw amino-acid sequence, 148 residues long: Small ribosomal subunit protein eS6 (148 aa).

It belongs to the eukaryotic ribosomal protein eS6 family.

This Pyrobaculum arsenaticum (strain DSM 13514 / JCM 11321 / PZ6) protein is Small ribosomal subunit protein eS6.